A 412-amino-acid polypeptide reads, in one-letter code: MGFITKAIPIVLAALSTVNGARILEAGPHAETIPNKYIVVMKKDVSEEAFSAHTTWLSQTLNSRLMRRAGSSKPMAGMQDKYSLGNVFRAYSGEFDEAMIKDISGHDDVDFIEPDFVVRTTTNGTNLTHQDNVPSWGLARVGSKQAGGTTYYYDPSAGKGVRAYIIDTGIDTDHKDFGGRAKWGKNFADDMDQDCNGHGTHVAGTVGGTQYGLAKSVSLIAVKVLDCEGSGSNSGVIKGMEWAMRDASGGGNGTAKAAGKTVMNMSLGGPRSEATNQAAKAISDAGIFLAVAAGNENMDAQHSSPASEPSVCTVAASTKDDGKASFSNYGSAVDVYAPGKDITSLKPGGSTDTLSGTSMASPHVCGLGAYLIGLGKQGGPGLCDTIKEMANDAIQSPGEDTTSKLIYNGSGK.

Residues 1-20 form the signal peptide; the sequence is MGFITKAIPIVLAALSTVNG. Residues 21 to 127 constitute a propeptide that is removed on maturation; sequence ARILEAGPHA…VRTTTNGTNL (107 aa). The region spanning 36–120 is the Inhibitor I9 domain; it reads KYIVVMKKDV…FIEPDFVVRT (85 aa). Residues 135 to 412 form the Peptidase S8 domain; that stretch reads SWGLARVGSK…SKLIYNGSGK (278 aa). Catalysis depends on charge relay system residues Asp-167 and His-198. 2 N-linked (GlcNAc...) asparagine glycosylation sites follow: Asn-252 and Asn-264. Ser-358 acts as the Charge relay system in catalysis. Asn-408 is a glycosylation site (N-linked (GlcNAc...) asparagine).

Belongs to the peptidase S8 family.

The protein resides in the secreted. Secreted subtilisin-like serine protease with keratinolytic activity that contributes to pathogenicity. The protein is Subtilisin-like protease 6 (SUB6) of Arthroderma benhamiae (strain ATCC MYA-4681 / CBS 112371) (Trichophyton mentagrophytes).